A 390-amino-acid polypeptide reads, in one-letter code: Chalcone synthase (390 aa).

The active site involves cysteine 164.

The protein belongs to the thiolase-like superfamily. Chalcone/stilbene synthases family.

It carries out the reaction (E)-4-coumaroyl-CoA + 3 malonyl-CoA + 3 H(+) = 2',4,4',6'-tetrahydroxychalcone + 3 CO2 + 4 CoA. Its pathway is secondary metabolite biosynthesis; flavonoid biosynthesis. Its function is as follows. The primary product of this enzyme is 4,2',4',6'-tetrahydroxychalcone (also termed naringenin-chalcone or chalcone) which can under specific conditions spontaneously isomerize into naringenin. The sequence is that of Chalcone synthase (CHS) from Antirrhinum majus (Garden snapdragon).